Reading from the N-terminus, the 144-residue chain is Protein SprT-like (144 aa).

The region spanning 4–143 (NKYVQEVSLQ…GKCRGKLTLK (140 aa)) is the SprT-like domain. Zn(2+) is bound at residue histidine 64. Residue glutamate 65 is part of the active site. Histidine 68 is a binding site for Zn(2+).

This sequence belongs to the SprT family. Zn(2+) is required as a cofactor.

The protein localises to the cytoplasm. This is Protein SprT-like from Streptococcus suis (strain 98HAH33).